Consider the following 205-residue polypeptide: Thiamine-phosphate synthase (205 aa).

Residues Gln37 to Lys41 and Asn69 each bind 4-amino-2-methyl-5-(diphosphooxymethyl)pyrimidine. Positions 70 and 89 each coordinate Mg(2+). A 4-amino-2-methyl-5-(diphosphooxymethyl)pyrimidine-binding site is contributed by Ser108. Residue Thr134 to Ser136 participates in 2-[(2R,5Z)-2-carboxy-4-methylthiazol-5(2H)-ylidene]ethyl phosphate binding. Position 137 (Lys137) interacts with 4-amino-2-methyl-5-(diphosphooxymethyl)pyrimidine. Residues Gly165 and Ile185–Ser186 each bind 2-[(2R,5Z)-2-carboxy-4-methylthiazol-5(2H)-ylidene]ethyl phosphate.

It belongs to the thiamine-phosphate synthase family. Requires Mg(2+) as cofactor.

The catalysed reaction is 2-[(2R,5Z)-2-carboxy-4-methylthiazol-5(2H)-ylidene]ethyl phosphate + 4-amino-2-methyl-5-(diphosphooxymethyl)pyrimidine + 2 H(+) = thiamine phosphate + CO2 + diphosphate. The enzyme catalyses 2-(2-carboxy-4-methylthiazol-5-yl)ethyl phosphate + 4-amino-2-methyl-5-(diphosphooxymethyl)pyrimidine + 2 H(+) = thiamine phosphate + CO2 + diphosphate. It catalyses the reaction 4-methyl-5-(2-phosphooxyethyl)-thiazole + 4-amino-2-methyl-5-(diphosphooxymethyl)pyrimidine + H(+) = thiamine phosphate + diphosphate. Its pathway is cofactor biosynthesis; thiamine diphosphate biosynthesis; thiamine phosphate from 4-amino-2-methyl-5-diphosphomethylpyrimidine and 4-methyl-5-(2-phosphoethyl)-thiazole: step 1/1. Condenses 4-methyl-5-(beta-hydroxyethyl)thiazole monophosphate (THZ-P) and 2-methyl-4-amino-5-hydroxymethyl pyrimidine pyrophosphate (HMP-PP) to form thiamine monophosphate (TMP). The protein is Thiamine-phosphate synthase of Clostridium botulinum (strain Langeland / NCTC 10281 / Type F).